We begin with the raw amino-acid sequence, 80 residues long: Exodeoxyribonuclease 7 small subunit (80 aa).

It belongs to the XseB family. As to quaternary structure, heterooligomer composed of large and small subunits.

The protein resides in the cytoplasm. It catalyses the reaction Exonucleolytic cleavage in either 5'- to 3'- or 3'- to 5'-direction to yield nucleoside 5'-phosphates.. Its function is as follows. Bidirectionally degrades single-stranded DNA into large acid-insoluble oligonucleotides, which are then degraded further into small acid-soluble oligonucleotides. This chain is Exodeoxyribonuclease 7 small subunit, found in Aliivibrio fischeri (strain ATCC 700601 / ES114) (Vibrio fischeri).